The chain runs to 341 residues: tRNA N6-adenosine threonylcarbamoyltransferase (341 aa).

Residues His111 and His115 each contribute to the Fe cation site. Substrate-binding positions include 134-138 (LVSGG), Asp167, Gly180, and Asn276. A Fe cation-binding site is contributed by Asp304.

It belongs to the KAE1 / TsaD family. Fe(2+) is required as a cofactor.

It is found in the cytoplasm. The enzyme catalyses L-threonylcarbamoyladenylate + adenosine(37) in tRNA = N(6)-L-threonylcarbamoyladenosine(37) in tRNA + AMP + H(+). Its function is as follows. Required for the formation of a threonylcarbamoyl group on adenosine at position 37 (t(6)A37) in tRNAs that read codons beginning with adenine. Is involved in the transfer of the threonylcarbamoyl moiety of threonylcarbamoyl-AMP (TC-AMP) to the N6 group of A37, together with TsaE and TsaB. TsaD likely plays a direct catalytic role in this reaction. The chain is tRNA N6-adenosine threonylcarbamoyltransferase from Alteromonas mediterranea (strain DSM 17117 / CIP 110805 / LMG 28347 / Deep ecotype).